A 560-amino-acid chain; its full sequence is Clathrin interactor EPSIN 1 (560 aa).

The 133-residue stretch at 20–152 (LKVLKVPEME…NNKEKISEIR (133 aa)) folds into the ENTH domain. Positions 190 to 288 (NFDSYKDRDS…KPSTGSANQV (99 aa)) are disordered. A compositionally biased stretch (basic and acidic residues) spans 193–220 (SYKDRDSREDKNDYESFQKSRRGVKTEE). Residues 221 to 233 (QSYTSKKSFSRYG) are compositionally biased toward polar residues. Positions 234 to 251 (STDHDNLSSGKKSPDSAK) are enriched in basic and acidic residues. Residues 274-287 (GTSSNKPSTGSANQ) are compositionally biased toward polar residues. Residues 296–300 (IGDFL) carry the Clathrin binding motif. The short motif at 320-322 (DLF) is the ALPHA-ADR binding element. A compositionally biased stretch (polar residues) spans 414–439 (SHSASVSTGPQAPSVHGSATNTTSPL). Disordered stretches follow at residues 414 to 453 (SHSASVSTGPQAPSVHGSATNTTSPLSFADSKPQHLQKKD) and 517 to 560 (LGKT…GFKQ). Residues 526-536 (QQQQQQQQQQQ) are compositionally biased toward low complexity. Over residues 544–554 (FFSSLSNQRYQ) the composition is skewed to polar residues.

It belongs to the epsin family. In terms of assembly, interacts with clathrin, VTI11, GAMMA-ADR and VSR1. Binds to the deubiquitinating enzyme AMSH3. Mostly expressed in cotyledons and flowers, and, to a lower extent, in roots, leaves and siliques (at protein level).

Its subcellular location is the golgi apparatus. The protein localises to the prevacuolar compartment. It localises to the cytoplasm. It is found in the cytoplasmic vesicle. The protein resides in the clathrin-coated vesicle. Its subcellular location is the cytoskeleton. In terms of biological role, may have a role in transport via clathrin-coated vesicles from the trans-Golgi network to endosomes. Stimulates clathrin assembly. Does not seem to bind to phospholipids. Plays an important role in the vacuolar trafficking of soluble cargo proteins at the trans-Golgi network. The polypeptide is Clathrin interactor EPSIN 1 (EPSIN1) (Arabidopsis thaliana (Mouse-ear cress)).